A 319-amino-acid chain; its full sequence is Formimidoylglutamase (319 aa).

Residues histidine 131, aspartate 154, histidine 156, aspartate 158, cysteine 248, and aspartate 250 each coordinate Mn(2+).

The protein belongs to the arginase family. Requires Mn(2+) as cofactor.

The catalysed reaction is N-formimidoyl-L-glutamate + H2O = formamide + L-glutamate. The protein operates within amino-acid degradation; L-histidine degradation into L-glutamate; L-glutamate from N-formimidoyl-L-glutamate (hydrolase route): step 1/1. In terms of biological role, catalyzes the conversion of N-formimidoyl-L-glutamate to L-glutamate and formamide. The protein is Formimidoylglutamase of Legionella pneumophila (strain Lens).